We begin with the raw amino-acid sequence, 431 residues long: MSSIRFLCQRCHQALKLSGSSESRSLPAAPAPTSGQAEPGDTREPGVTTREVTDAEEQQDGASSRSPPGDGSVSKGHANIFTLLGELGAMHMLSSIQKAAGDIFDIVSGQAVVDHPLCEECTDSLLEQLDIQLALTEADSQNYQRCLETGELATSEDEAAALRAELRDLELEEARLVQELEDVDRNNARAAADLQAAQAEAAELDQQERQHYRDYSALKRQQLELLDQLGNVENQLQYARVQRDRLKEINCFTATFEIWVEGPLGVINNFRLGRLPTVRVGWNEINTAWGQAALLLLTLANTIGLQFQRYRLIPCGNHSYLKSLTDDRTELPLFCYGGQDVFLNNKYDRAMVAFLDCMQQFKEEAEKGELGLSLPYGIQVETGLMEDVGGRGECYSIRTHLNTQELWTKALKFMLINFKWSLIWVASRYQK.

A disordered region spans residues 17–74 (LSGSSESRSLPAAPAPTSGQAEPGDTREPGVTTREVTDAEEQQDGASSRSPPGDGSVS). Residues 125 to 248 (LLEQLDIQLA…ARVQRDRLKE (124 aa)) are a coiled coil. Residues 173–243 (EARLVQELED…NQLQYARVQR (71 aa)) are required for homodimer formation.

It belongs to the beclin family. As to quaternary structure, homodimer (via coiled-coil domain). Interacts (via coiled-coil domain) with ATG14 (via coiled-coil domain); this interaction is tighter than BECN2 self-association. Interacts with AMBRA1, UVRAG and PIK3C3/VPS34; these interactions are not disrupted by starvation. Does not interact with RUBCN. Interacts (via N-terminus) with GPRASP1/GASP1; the interaction is direct. In terms of tissue distribution, present in fetal and adult brain (at protein level).

It localises to the cytoplasm. Its function is as follows. Involved in 2 distinct lysosomal degradation pathways: acts as a regulator of autophagy and as a regulator of G-protein coupled receptors turnover. Regulates degradation in lysosomes of a variety of G-protein coupled receptors via its interaction with GPRASP1/GASP1. The chain is Beclin-2 from Homo sapiens (Human).